Here is a 158-residue protein sequence, read N- to C-terminus: SsrA-binding protein (158 aa).

The disordered stretch occupies residues 134 to 158 (KLHDKRETEKERDWNRQKSRLLKTG). Basic and acidic residues predominate over residues 137 to 149 (DKRETEKERDWNR).

Belongs to the SmpB family.

It localises to the cytoplasm. Required for rescue of stalled ribosomes mediated by trans-translation. Binds to transfer-messenger RNA (tmRNA), required for stable association of tmRNA with ribosomes. tmRNA and SmpB together mimic tRNA shape, replacing the anticodon stem-loop with SmpB. tmRNA is encoded by the ssrA gene; the 2 termini fold to resemble tRNA(Ala) and it encodes a 'tag peptide', a short internal open reading frame. During trans-translation Ala-aminoacylated tmRNA acts like a tRNA, entering the A-site of stalled ribosomes, displacing the stalled mRNA. The ribosome then switches to translate the ORF on the tmRNA; the nascent peptide is terminated with the 'tag peptide' encoded by the tmRNA and targeted for degradation. The ribosome is freed to recommence translation, which seems to be the essential function of trans-translation. This is SsrA-binding protein from Allorhizobium ampelinum (strain ATCC BAA-846 / DSM 112012 / S4) (Agrobacterium vitis (strain S4)).